The sequence spans 505 residues: uncharacterized protein (505 aa).

The interval 461–480 (RTDVHPGNSDDEGAYSSADS) is disordered.

It to M.jannaschii MJ0787.

This is an uncharacterized protein from Methanothermobacter thermautotrophicus (strain ATCC 29096 / DSM 1053 / JCM 10044 / NBRC 100330 / Delta H) (Methanobacterium thermoautotrophicum).